Reading from the N-terminus, the 114-residue chain is Large ribosomal subunit protein uL24 (114 aa).

Belongs to the universal ribosomal protein uL24 family. As to quaternary structure, part of the 50S ribosomal subunit.

Its function is as follows. One of two assembly initiator proteins, it binds directly to the 5'-end of the 23S rRNA, where it nucleates assembly of the 50S subunit. In terms of biological role, one of the proteins that surrounds the polypeptide exit tunnel on the outside of the subunit. This Acidothermus cellulolyticus (strain ATCC 43068 / DSM 8971 / 11B) protein is Large ribosomal subunit protein uL24.